A 396-amino-acid chain; its full sequence is uncharacterized protein (396 aa).

The protein belongs to the mycobacterial PPE family.

This is an uncharacterized protein from Mycobacterium tuberculosis (strain CDC 1551 / Oshkosh).